Consider the following 72-residue polypeptide: Cytochrome b-c1 complex subunit 8 (72 aa).

The Mitochondrial matrix segment spans residues 2–41 (GKQPVKLKAVVYAISPFQQKIMPGLWKDLPGKIHHKVSEN). Residues 42–59 (WISATLLLGPLVGTYSYV) form a helical membrane-spanning segment. At 60–72 (QHFLEKEKLEHRY) the chain is on the mitochondrial intermembrane side.

Belongs to the UQCRQ/QCR8 family. Component of the ubiquinol-cytochrome c oxidoreductase (cytochrome b-c1 complex, complex III, CIII), a multisubunit enzyme composed of 3 respiratory subunits cytochrome b, cytochrome c1 and Rieske protein, 2 core protein subunits, and additional low-molecular weight protein subunits. The complex exists as an obligatory dimer and forms supercomplexes (SCs) in the inner mitochondrial membrane with cytochrome c oxidase (complex IV, CIV).

The protein resides in the mitochondrion inner membrane. Functionally, component of the ubiquinol-cytochrome c oxidoreductase, a multisubunit transmembrane complex that is part of the mitochondrial electron transport chain which drives oxidative phosphorylation. The respiratory chain contains 3 multisubunit complexes succinate dehydrogenase (complex II, CII), ubiquinol-cytochrome c oxidoreductase (cytochrome b-c1 complex, complex III, CIII) and cytochrome c oxidase (complex IV, CIV), that cooperate to transfer electrons derived from NADH and succinate to molecular oxygen, creating an electrochemical gradient over the inner membrane that drives transmembrane transport and the ATP synthase. The cytochrome b-c1 complex catalyzes electron transfer from ubiquinol to cytochrome c, linking this redox reaction to translocation of protons across the mitochondrial inner membrane, with protons being carried across the membrane as hydrogens on the quinol. In the process called Q cycle, 2 protons are consumed from the matrix, 4 protons are released into the intermembrane space and 2 electrons are passed to cytochrome c. The polypeptide is Cytochrome b-c1 complex subunit 8 (Solanum tuberosum (Potato)).